A 145-amino-acid polypeptide reads, in one-letter code: Beta sliding clamp (145 aa).

It belongs to the beta sliding clamp family. In terms of assembly, forms a ring-shaped head-to-tail homodimer around DNA which binds and tethers DNA polymerases and other proteins to the DNA. The DNA replisome complex has a single clamp-loading complex (3 tau and 1 each of delta, delta', psi and chi subunits) which binds 3 Pol III cores (1 core on the leading strand and 2 on the lagging strand) each with a beta sliding clamp dimer. Additional proteins in the replisome are other copies of gamma, psi and chi, Ssb, DNA helicase and RNA primase.

Its subcellular location is the cytoplasm. Functionally, confers DNA tethering and processivity to DNA polymerases and other proteins. Acts as a clamp, forming a ring around DNA (a reaction catalyzed by the clamp-loading complex) which diffuses in an ATP-independent manner freely and bidirectionally along dsDNA. Initially characterized for its ability to contact the catalytic subunit of DNA polymerase III (Pol III), a complex, multichain enzyme responsible for most of the replicative synthesis in bacteria; Pol III exhibits 3'-5' exonuclease proofreading activity. The beta chain is required for initiation of replication as well as for processivity of DNA replication. In Vibrio harveyi (Beneckea harveyi), this protein is Beta sliding clamp (dnaN).